A 191-amino-acid polypeptide reads, in one-letter code: Protein Ves (191 aa).

It belongs to the Ves family.

In Shigella flexneri, this protein is Protein Ves.